The chain runs to 227 residues: Ubiquitin domain-containing protein 1 (227 aa).

Residues Met-1 to Gly-14 are compositionally biased toward basic and acidic residues. Residues Met-1–Glu-45 are disordered. The span at Arg-15–Gly-24 shows a compositional bias: basic residues. Residues Gly-25–Ser-39 are compositionally biased toward basic and acidic residues. The region spanning Phe-150 to Pro-225 is the Ubiquitin-like domain.

In terms of biological role, may be involved in the regulation of cellular senescence through a positive feedback loop with TP53. The sequence is that of Ubiquitin domain-containing protein 1 (ubtd1) from Danio rerio (Zebrafish).